Here is a 382-residue protein sequence, read N- to C-terminus: Glutaminyl-peptide cyclotransferase-like protein (382 aa).

Residues 35–55 form a helical membrane-spanning segment; that stretch reads LLPLLLALAVGSAFYTIWSGW. The cysteines at positions 167 and 191 are disulfide-linked. Zn(2+) is bound at residue Asp186. Glu225 acts as the Proton acceptor in catalysis. Glu226 contributes to the Zn(2+) binding site. Asp269 acts as the Proton acceptor in catalysis. His351 is a Zn(2+) binding site.

Belongs to the glutaminyl-peptide cyclotransferase family.

The protein localises to the golgi apparatus membrane. It carries out the reaction N-terminal L-glutaminyl-[peptide] = N-terminal 5-oxo-L-prolyl-[peptide] + NH4(+). In terms of biological role, responsible for the biosynthesis of pyroglutamyl peptides. The sequence is that of Glutaminyl-peptide cyclotransferase-like protein (QPCTL) from Homo sapiens (Human).